Here is a 235-residue protein sequence, read N- to C-terminus: LexA repressor (235 aa).

Positions 47–67 (IREIADAVGLTSTSSVAHQLR) form a DNA-binding region, H-T-H motif. Active-site for autocatalytic cleavage activity residues include serine 159 and lysine 196.

This sequence belongs to the peptidase S24 family. In terms of assembly, homodimer.

The enzyme catalyses Hydrolysis of Ala-|-Gly bond in repressor LexA.. Its function is as follows. Represses a number of genes involved in the response to DNA damage (SOS response), including recA and lexA. In the presence of single-stranded DNA, RecA interacts with LexA causing an autocatalytic cleavage which disrupts the DNA-binding part of LexA, leading to derepression of the SOS regulon and eventually DNA repair. This chain is LexA repressor, found in Mycobacterium leprae (strain Br4923).